The chain runs to 162 residues: 2-C-methyl-D-erythritol 2,4-cyclodiphosphate synthase (162 aa).

A divalent metal cation is bound by residues Asp10 and His12. 4-CDP-2-C-methyl-D-erythritol 2-phosphate is bound by residues 10–12 (DVH) and 36–37 (HS). His44 contacts a divalent metal cation. 4-CDP-2-C-methyl-D-erythritol 2-phosphate-binding positions include 58–60 (DIG), 63–67 (FPDTD), 102–108 (AQAPRMA), 134–137 (TTSE), Phe141, and Arg144.

Belongs to the IspF family. In terms of assembly, homotrimer. The cofactor is a divalent metal cation.

It carries out the reaction 4-CDP-2-C-methyl-D-erythritol 2-phosphate = 2-C-methyl-D-erythritol 2,4-cyclic diphosphate + CMP. It participates in isoprenoid biosynthesis; isopentenyl diphosphate biosynthesis via DXP pathway; isopentenyl diphosphate from 1-deoxy-D-xylulose 5-phosphate: step 4/6. Its function is as follows. Involved in the biosynthesis of isopentenyl diphosphate (IPP) and dimethylallyl diphosphate (DMAPP), two major building blocks of isoprenoid compounds. Catalyzes the conversion of 4-diphosphocytidyl-2-C-methyl-D-erythritol 2-phosphate (CDP-ME2P) to 2-C-methyl-D-erythritol 2,4-cyclodiphosphate (ME-CPP) with a corresponding release of cytidine 5-monophosphate (CMP). This is 2-C-methyl-D-erythritol 2,4-cyclodiphosphate synthase from Chromohalobacter salexigens (strain ATCC BAA-138 / DSM 3043 / CIP 106854 / NCIMB 13768 / 1H11).